The primary structure comprises 277 residues: Urease accessory protein UreD (277 aa).

It belongs to the UreD family. As to quaternary structure, ureD, UreF and UreG form a complex that acts as a GTP-hydrolysis-dependent molecular chaperone, activating the urease apoprotein by helping to assemble the nickel containing metallocenter of UreC. The UreE protein probably delivers the nickel.

It localises to the cytoplasm. Required for maturation of urease via the functional incorporation of the urease nickel metallocenter. The protein is Urease accessory protein UreD of Pseudomonas entomophila (strain L48).